We begin with the raw amino-acid sequence, 305 residues long: Glycine--tRNA ligase alpha subunit (305 aa).

It belongs to the class-II aminoacyl-tRNA synthetase family. In terms of assembly, tetramer of two alpha and two beta subunits.

It localises to the cytoplasm. It catalyses the reaction tRNA(Gly) + glycine + ATP = glycyl-tRNA(Gly) + AMP + diphosphate. In Streptococcus pneumoniae serotype 19F (strain G54), this protein is Glycine--tRNA ligase alpha subunit.